A 403-amino-acid chain; its full sequence is S-adenosylmethionine synthase (403 aa).

ATP is bound at residue His17. Residue Asp19 participates in Mg(2+) binding. Glu45 contributes to the K(+) binding site. L-methionine is bound by residues Glu58 and Gln104. Residues 104–114 are flexible loop; that stretch reads QSPDIAQGVDT. Residues 179–181, 250–251, Asp259, 265–266, Ala282, and Lys286 contribute to the ATP site; these read DGK, KF, and RK. Asp259 serves as a coordination point for L-methionine. Lys290 is a binding site for L-methionine.

The protein belongs to the AdoMet synthase family. Homotetramer; dimer of dimers. Mg(2+) is required as a cofactor. It depends on K(+) as a cofactor.

The protein localises to the cytoplasm. It catalyses the reaction L-methionine + ATP + H2O = S-adenosyl-L-methionine + phosphate + diphosphate. Its pathway is amino-acid biosynthesis; S-adenosyl-L-methionine biosynthesis; S-adenosyl-L-methionine from L-methionine: step 1/1. In terms of biological role, catalyzes the formation of S-adenosylmethionine (AdoMet) from methionine and ATP. The overall synthetic reaction is composed of two sequential steps, AdoMet formation and the subsequent tripolyphosphate hydrolysis which occurs prior to release of AdoMet from the enzyme. The sequence is that of S-adenosylmethionine synthase from Mycolicibacterium paratuberculosis (strain ATCC BAA-968 / K-10) (Mycobacterium paratuberculosis).